The primary structure comprises 96 residues: RING finger protein Z (96 aa).

Residues 1–10 are compositionally biased toward basic and acidic residues; sequence MGNCRSKQES. A disordered region spans residues 1–21; it reads MGNCRSKQESHPICPNTQTPE. The N-myristoyl glycine; by host moiety is linked to residue G2. An RING-type; atypical zinc finger spans residues 41–77; sequence CKCCWFADRNLINCSDHYLCLRCLNVMLRTSNLCNIC. Residues 91–94 carry the PTAP/PSAP motif motif; it reads PTAP.

Belongs to the arenaviridae Z protein family. Interacts with protein NP; this interaction probably directs the encapsidated genome to budding sites. Interacts (via RING domain) with polymerase L; this interaction inhibits viral transcription and replication, Z partially blocks the product exit tunnel for the releasing nascent RNA product. Interacts with the glycoprotein complex; this interaction plays a role in virion budding. Interacts with host eIF4E; this interaction results in eIF4E reduced affinity for its substrate, the 5'-m7 G cap structure. Interacts (via late-budding domain) with host TSG101; this interaction is essential for budding and release of viral particles. Interacts with host RPLP0; this interaction may serve to load ribosome-like particles inside the virion. Interacts with host PML; this interaction induces PML bodies redistribution in the cytoplasm upon viral infection. Myristoylation is required for the role of RING finger protein Z in assembly and budding.

It localises to the virion. The protein localises to the host cytoplasm. Its subcellular location is the host perinuclear region. It is found in the host cell membrane. Functionally, plays a crucial role in virion assembly and budding. Expressed late in the virus life cycle, it acts as an inhibitor of viral transcription and RNA synthesis by interacting with the viral polymerase L. Presumably recruits the NP encapsidated genome to cellular membranes at budding sites via direct interaction with NP. Plays critical roles in the final steps of viral release by interacting with host TSG101, a member of the vacuolar protein-sorting pathway and using other cellular host proteins involved in vesicle formation pathway. The budding of the virus progeny occurs after association of protein Z with the viral glycoprotein complex SSP-GP1-GP2 at the cell periphery, step that requires myristoylation of protein Z. Also selectively represses protein production by associating with host eIF4E. In cell-based minigenome assay, has an inhibitory effect on the ribonucleoprotein machinery (vRNP), which is responsible for the replication and transcription of the viral genome. The sequence is that of RING finger protein Z from Hylaeamys megacephalus (Large-headed rice rat).